Here is a 406-residue protein sequence, read N- to C-terminus: MDFSLSEEQTMLKEVARRFTANELMPLEKVLLEREMRMWTDGYTLLPEADHARLMKITQEMGFWGIEVDEKLGGQGLGMFAKTLVVEEMSKSLIGFSHHGFTLPPDAPNLYYLEECGSPAQRDKYVRRYCRGEIDSAMMATEPGAGSDISGLTTTAVRENGQWVINGSKIFISKCDKDELFFICIAVTDKEAPTKRRFTAFILDKDTPGLRIGAEIPVIGAMPTWSVYLDNVRVGDEAVLGEVGDAFIPLQNRFGVRRIELAAHCTGMAERLIQMMIDQANLRKTFGVALADRQTVQNWIADSTIELEQVRLQLYFTAWKSDQGHKDLRLEAASLKIAATEMLTRVADRAIQLHGGLGLSREMGIEYVARMVRIWRVVEGASEIHRMSIAKKLLTDGRTYSPFVAA.

Belongs to the acyl-CoA dehydrogenase family. In terms of assembly, homotetramer. The cofactor is FAD.

It carries out the reaction (R)-2-benzylsuccinyl-CoA + oxidized [electron-transfer flavoprotein] + H(+) = (E)-2-benzylidenesuccinyl-CoA + reduced [electron-transfer flavoprotein]. The protein operates within xenobiotic degradation; toluene degradation. Its activity is regulated as follows. Inhibited by (S)-benzylsuccinyl-CoA. Functionally, catalyzes the oxidation of benzylsuccinyl-CoA to benzylidenesuccinyl-CoA. In Thauera aromatica, this protein is (R)-benzylsuccinyl-CoA dehydrogenase (bbsG).